Here is a 102-residue protein sequence, read N- to C-terminus: Small ribosomal subunit protein eS24 (102 aa).

This sequence belongs to the eukaryotic ribosomal protein eS24 family.

In Methanococcus maripaludis (strain DSM 14266 / JCM 13030 / NBRC 101832 / S2 / LL), this protein is Small ribosomal subunit protein eS24.